The following is a 1032-amino-acid chain: Kinesin heavy chain isoform 5A (1032 aa).

Ala2 is subject to N-acetylalanine. Positions Ser9–Ile327 constitute a Kinesin motor domain. Gly86 to Thr93 contacts ATP. The tract at residues Val174–Lys315 is microtubule-binding. A necessary for interaction with ZFYVE27 region spans residues Glu271–Ala361. Residues Ala331 to Tyr906 adopt a coiled-coil conformation. Residues Thr353–Ser1032 form an interaction with BICD2 region. Residue Thr397 is modified to Phosphothreonine. The tract at residues Val904–Arg939 is disordered. The tract at residues Lys907–Ser1032 is globular.

The protein belongs to the TRAFAC class myosin-kinesin ATPase superfamily. Kinesin family. Kinesin subfamily. In terms of assembly, oligomer composed of two heavy chains and two light chains. Interacts with GRIP1. Interacts with FMR1 (via C-terminus); this interaction is increased in a mGluR-dependent manner. Interacts with BORCS5. Interacts with ZFYVE27. Interacts with VAPA, VAPB, SURF4, RAB11A (GDP-bound form), RAB11B (GDP-bound form) and RTN3 in a ZFYVE27-dependent manner. Interacts with BICD2. Interacts with DTNB.

The protein localises to the cytoplasm. The protein resides in the perinuclear region. Its subcellular location is the cytoskeleton. It is found in the perikaryon. It catalyses the reaction ATP + H2O + a kinesin associated with a microtubule at position (n) = ADP + phosphate a kinesin associated with a microtubule at position (n+1, toward the plus end).. Its function is as follows. Microtubule-dependent motor required for slow axonal transport of neurofilament proteins (NFH, NFM and NFL). Can induce formation of neurite-like membrane protrusions in non-neuronal cells in a ZFYVE27-dependent manner. The ZFYVE27-KIF5A complex contributes to the vesicular transport of VAPA, VAPB, SURF4, RAB11A, RAB11B and RTN3 proteins in neurons. Required for anterograde axonal transportation of MAPK8IP3/JIP3 which is essential for MAPK8IP3/JIP3 function in axon elongation. The protein is Kinesin heavy chain isoform 5A (KIF5A) of Pongo abelii (Sumatran orangutan).